Consider the following 429-residue polypeptide: Glutamate-1-semialdehyde 2,1-aminomutase (429 aa).

At lysine 265 the chain carries N6-(pyridoxal phosphate)lysine.

It belongs to the class-III pyridoxal-phosphate-dependent aminotransferase family. HemL subfamily. As to quaternary structure, homodimer. Pyridoxal 5'-phosphate serves as cofactor.

It localises to the cytoplasm. The enzyme catalyses (S)-4-amino-5-oxopentanoate = 5-aminolevulinate. It participates in porphyrin-containing compound metabolism; protoporphyrin-IX biosynthesis; 5-aminolevulinate from L-glutamyl-tRNA(Glu): step 2/2. The polypeptide is Glutamate-1-semialdehyde 2,1-aminomutase (Shewanella piezotolerans (strain WP3 / JCM 13877)).